Reading from the N-terminus, the 124-residue chain is Large ribosomal subunit protein bL17 (124 aa).

It belongs to the bacterial ribosomal protein bL17 family. In terms of assembly, part of the 50S ribosomal subunit. Contacts protein L32.

In Acidithiobacillus ferrooxidans (strain ATCC 23270 / DSM 14882 / CIP 104768 / NCIMB 8455) (Ferrobacillus ferrooxidans (strain ATCC 23270)), this protein is Large ribosomal subunit protein bL17.